The sequence spans 425 residues: 1,4-beta-D-glucan glucohydrolase (425 aa).

Glu164 (proton donor) is an active-site residue. Glu349 acts as the Nucleophile in catalysis.

Belongs to the glycosyl hydrolase 1 family. As to quaternary structure, monomer.

The catalysed reaction is Hydrolysis of (1-&gt;4)-linkages in (1-&gt;4)-beta-D-glucans, to remove successive glucose units.. The enzyme catalyses Hydrolysis of terminal, non-reducing beta-D-glucosyl residues with release of beta-D-glucose.. It functions in the pathway glycan metabolism; cellulose degradation. Its pathway is glycan metabolism; beta-D-glucan degradation. In terms of biological role, broad substrate specificity glycosidase. Releases glucose from soluble glucooligomers, with a preference for longer oligomers; acts more readily on cellotetraose than on cellobiose. Displays similar activities towards the disaccharides lactose and cellobiose. Is also able to hydrolyze various aryl-beta-glycosides in vitro. The protein is 1,4-beta-D-glucan glucohydrolase (bglA) of Thermotoga neapolitana.